Here is a 330-residue protein sequence, read N- to C-terminus: Protein pelota homolog (330 aa).

This sequence belongs to the eukaryotic release factor 1 family. Pelota subfamily. Monomer. It depends on a divalent metal cation as a cofactor.

The protein resides in the cytoplasm. May function in recognizing stalled ribosomes, interact with stem-loop structures in stalled mRNA molecules, and effect endonucleolytic cleavage of the mRNA. May play a role in the release non-functional ribosomes and degradation of damaged mRNAs. Has endoribonuclease activity. This chain is Protein pelota homolog, found in Pyrobaculum islandicum (strain DSM 4184 / JCM 9189 / GEO3).